Consider the following 377-residue polypeptide: Guanine nucleotide-binding protein subunit alpha-13 (377 aa).

Residues C14 and C18 are each lipidated (S-palmitoyl cysteine). A G-alpha domain is found at 47–377; it reads RLVKILLLGA…HDNLKQLMLQ (331 aa). Residues 50 to 63 are G1 motif; the sequence is KILLLGAGESGKST. Residues 58-63, S173, and 197-200 each bind GTP; these read ESGKST and LLAR. S62 provides a ligand contact to Mg(2+). Residues 195–203 are G2 motif; the sequence is DILLARRPT. T203 is a Mg(2+) binding site. The residue at position 203 (T203) is a Phosphothreonine; by PKA. The interval 218-227 is G3 motif; it reads FKMVDVGGQR. The segment at 287 to 294 is G4 motif; the sequence is ILFLNKTD. GTP contacts are provided by residues 291 to 294 and A349; that span reads NKTD. The interval 347 to 352 is G5 motif; it reads TTAINT.

The protein belongs to the G-alpha family. G(12) subfamily. G proteins are composed of 3 units; alpha, beta and gamma. The alpha chain contains the guanine nucleotide binding site. Interacts with UBXD5. Interacts with HAX1. Interacts (in GTP-bound form) with PPP5C (via TPR repeats); activates PPP5C phosphatase activity and translocates PPP5C to the cell membrane. Interacts with RGS22. Interacts with ARHGEF1. Interacts (in GTP-bound form) with ARHGEF11 (via RGS domain). Interacts (in GTP-bound form) with ARHGEF12 (via RGS domain). Interacts (in GTP-bound form) with CTNND1. Interacts with GAS2L2. Interacts with GPR35. Interacts with GPR174. In terms of processing, palmitoylation is critical for proper membrane localization and signaling. Post-translationally, phosphorylation on Thr-203 by PKA destabilizes the heterotrimer of alpha, beta and gamma, and inhibits Rho activation.

It localises to the membrane. It is found in the melanosome. The protein resides in the cytoplasm. The protein localises to the nucleus. Guanine nucleotide-binding proteins (G proteins) are involved as modulators or transducers in various transmembrane signaling systems. Activates effector molecule RhoA by binding and activating RhoGEFs (ARHGEF1/p115RhoGEF, ARHGEF11/PDZ-RhoGEF and ARHGEF12/LARG). GNA13-dependent Rho signaling subsequently regulates transcription factor AP-1 (activating protein-1). Promotes tumor cell invasion and metastasis by activating RhoA/ROCK signaling pathway. Inhibits CDH1-mediated cell adhesion in process independent from Rho activation. In lymphoid follicles, transmits P2RY8- and S1PR2-dependent signals that lead to inhibition of germinal center (GC) B cell growth and migration outside the GC niche. The protein is Guanine nucleotide-binding protein subunit alpha-13 (Gna13) of Rattus norvegicus (Rat).